The chain runs to 260 residues: Phosphatidate cytidylyltransferase (260 aa).

The next 7 membrane-spanning stretches (helical) occupy residues 9 to 29 (IIALIVFLPVLLKGGLILMLF), 46 to 66 (MIKFLSIPGIISALGILIIML), 70 to 90 (AGSWVNDLQLKSLIAMSFILL), 102 to 122 (FMDAAFCLMSIAYVGIGFMYL), 130 to 150 (LHYILFAFLVVWLTDTGAYIF), 172 to 192 (FVGGLICSLIVPLVMMIFVDF), and 196 to 216 (LWLLLIITIILSMFGQLGDLV).

The protein belongs to the CDS family.

Its subcellular location is the cell membrane. The enzyme catalyses a 1,2-diacyl-sn-glycero-3-phosphate + CTP + H(+) = a CDP-1,2-diacyl-sn-glycerol + diphosphate. It functions in the pathway phospholipid metabolism; CDP-diacylglycerol biosynthesis; CDP-diacylglycerol from sn-glycerol 3-phosphate: step 3/3. This Staphylococcus saprophyticus subsp. saprophyticus (strain ATCC 15305 / DSM 20229 / NCIMB 8711 / NCTC 7292 / S-41) protein is Phosphatidate cytidylyltransferase (cdsA).